Here is a 305-residue protein sequence, read N- to C-terminus: uncharacterized protein (305 aa).

A run of 3 helical transmembrane segments spans residues 52–72, 89–109, and 120–140; these read TINLTSAIIILVVGMFISKII, IAGFLSALMRYIIITFTFIAA, and VIAILGAAGMAIGLALQGSLS.

Belongs to the MscS (TC 1.A.23) family.

It is found in the cell membrane. This is an uncharacterized protein from Buchnera aphidicola subsp. Acyrthosiphon pisum (strain APS) (Acyrthosiphon pisum symbiotic bacterium).